The sequence spans 181 residues: Protein Ves (181 aa).

The protein belongs to the Ves family.

The polypeptide is Protein Ves (Cronobacter sakazakii (strain ATCC BAA-894) (Enterobacter sakazakii)).